The following is a 771-amino-acid chain: Metal transporter CNNM4 (771 aa).

The Extracellular portion of the chain corresponds to 1–175 (MAPGGGGGRR…LLFMVEEHGR (175 aa)). N-linked (GlcNAc...) asparagine glycosylation occurs at Asn119. One can recognise a CNNM transmembrane domain in the interval 175-355 (RFLPLWLHIL…EPYNDLVKEE (181 aa)). Residues 176-196 (FLPLWLHILLVMVLLVLSGIF) traverse the membrane as a helical segment. The Cytoplasmic portion of the chain corresponds to 197–237 (SGLNLGLMALDPMELRIVQNCGTEKERKYARKIEPIRRKGN). The segment at residues 238-258 (YLLCSLLLGNVLVNTSLTILL) is an intramembrane region (helical). The Cytoplasmic portion of the chain corresponds to 259–261 (DNL). A helical membrane pass occupies residues 262 to 282 (IGSGIMAVASSTIGIVIFGEI). At 283 to 290 (LPQALCSR) the chain is on the extracellular side. Residues 291-313 (HGLAVGANTIVLTKVFMLLTFPL) form a helical membrane-spanning segment. Residues 314-771 (SFPISKLLDF…LHRASEEETI (458 aa)) lie on the Cytoplasmic side of the membrane. CBS domains lie at 374-435 (MTQL…CTPL) and 442-508 (YNHP…ILDE). Residues Ser657, Ser661, and Ser766 each carry the phosphoserine modification.

The protein belongs to the ACDP family. In terms of assembly, interacts with COX11. As to expression, cornea, retina, teeth (at protein level). In the retina it is predominantly localized to the outer plexiform layer, inner plexiform layer and ganglion cell layer. In the tooth strongest expression is observed in the cell body of the ameloblasts. Expressed at high levels in the gastrointestinal tract and testis.

Its subcellular location is the cell membrane. Functionally, probable metal transporter. The interaction with the metal ion chaperone COX11 suggests that it may play a role in sensory neuron functions. May play a role in biomineralization and retinal function. This Mus musculus (Mouse) protein is Metal transporter CNNM4 (Cnnm4).